Consider the following 227-residue polypeptide: Fibrillarin-like rRNA/tRNA 2'-O-methyltransferase (227 aa).

S-adenosyl-L-methionine is bound by residues 86–87, 105–106, 130–131, and 150–153; these read TT, EF, DA, and DVAQ.

Belongs to the methyltransferase superfamily. Fibrillarin family. As to quaternary structure, interacts with nop5. Component of box C/D small ribonucleoprotein (sRNP) particles that contain rpl7ae, FlpA and nop5, plus a guide RNA.

Its function is as follows. Involved in pre-rRNA and tRNA processing. Utilizes the methyl donor S-adenosyl-L-methionine to catalyze the site-specific 2'-hydroxyl methylation of ribose moieties in rRNA and tRNA. Site specificity is provided by a guide RNA that base pairs with the substrate. Methylation occurs at a characteristic distance from the sequence involved in base pairing with the guide RNA. This Pyrococcus horikoshii (strain ATCC 700860 / DSM 12428 / JCM 9974 / NBRC 100139 / OT-3) protein is Fibrillarin-like rRNA/tRNA 2'-O-methyltransferase.